The following is a 377-amino-acid chain: Chaperone protein DnaJ (377 aa).

The 66-residue stretch at 5-70 (DYYQILGIPK…EKRSAYDQYG (66 aa)) folds into the J domain. The CR-type zinc-finger motif lies at 132–210 (GIKKEIQIPT…CHGQGRVETY (79 aa)). The Zn(2+) site is built by cysteine 145, cysteine 148, cysteine 162, cysteine 165, cysteine 184, cysteine 187, cysteine 198, and cysteine 201. CXXCXGXG motif repeat units follow at residues 145–152 (CKTCYGSG), 162–169 (CSTCHGKG), 184–191 (CPTCHGKG), and 198–205 (CNLCHGQG).

Belongs to the DnaJ family. In terms of assembly, homodimer. The cofactor is Zn(2+).

It is found in the cytoplasm. In terms of biological role, participates actively in the response to hyperosmotic and heat shock by preventing the aggregation of stress-denatured proteins and by disaggregating proteins, also in an autonomous, DnaK-independent fashion. Unfolded proteins bind initially to DnaJ; upon interaction with the DnaJ-bound protein, DnaK hydrolyzes its bound ATP, resulting in the formation of a stable complex. GrpE releases ADP from DnaK; ATP binding to DnaK triggers the release of the substrate protein, thus completing the reaction cycle. Several rounds of ATP-dependent interactions between DnaJ, DnaK and GrpE are required for fully efficient folding. Also involved, together with DnaK and GrpE, in the DNA replication of plasmids through activation of initiation proteins. This chain is Chaperone protein DnaJ, found in Buchnera aphidicola subsp. Acyrthosiphon pisum (strain 5A).